Consider the following 287-residue polypeptide: MEKDIKKNEIENKNREKAFEIQNVSFSYDLVNNVLNDVSFDIYENEYVCIIGHNGSGKSTISKVLVGLLKPHQGNLKIFGETISYLNFFHLRTNVGIIFQNPDSQFIGLSAKDDIAFGLENRKINPSVMDDIIESASEVVDIKELLDKDSSSLSGGQKQRVAIASVLATNPRIIIFDESTSMLDPRGKMELKKIMLDLKNKANKTVISITHDMDEVLNADRVIVFKKGQIIRTGKPSEIFTDEEFLASSALDFPFILKLSKELKSKNVNVNFTINKEQLLDQICKKK.

Positions 19–252 (FEIQNVSFSY…EEFLASSALD (234 aa)) constitute an ABC transporter domain. 52–59 (GHNGSGKS) provides a ligand contact to ATP.

Belongs to the ABC transporter superfamily. Energy-coupling factor EcfA family. Forms a stable energy-coupling factor (ECF) transporter complex composed of 2 membrane-embedded substrate-binding proteins (S component), 2 ATP-binding proteins (A component) and 2 transmembrane proteins (T component).

It localises to the cell membrane. Functionally, ATP-binding (A) component of a common energy-coupling factor (ECF) ABC-transporter complex. Unlike classic ABC transporters this ECF transporter provides the energy necessary to transport a number of different substrates. The sequence is that of Energy-coupling factor transporter ATP-binding protein EcfA from Malacoplasma penetrans (strain HF-2) (Mycoplasma penetrans).